The following is a 247-amino-acid chain: ATP synthase subunit a (247 aa).

The next 6 helical transmembrane spans lie at 23-43, 90-110, 116-136, 145-165, 194-214, and 215-235; these read ISFTNSSAMMVLSICLITLFL, LFMFVLFGNLLGMMPIPVIGF, VIVTFAMALVVFVGVTVIGFA, MFFPHGAPIATAVILIPIELI, GFVVSLGAFYLIPGAVPFAFL, and SAITVLEFGIALLQAYVFTIL.

This sequence belongs to the ATPase A chain family. As to quaternary structure, F-type ATPases have 2 components, CF(1) - the catalytic core - and CF(0) - the membrane proton channel. CF(1) has five subunits: alpha(3), beta(3), gamma(1), delta(1), epsilon(1). CF(0) has three main subunits: a(1), b(2) and c(9-12). The alpha and beta chains form an alternating ring which encloses part of the gamma chain. CF(1) is attached to CF(0) by a central stalk formed by the gamma and epsilon chains, while a peripheral stalk is formed by the delta and b chains.

It localises to the cell inner membrane. Functionally, key component of the proton channel; it plays a direct role in the translocation of protons across the membrane. This Paramagnetospirillum magneticum (strain ATCC 700264 / AMB-1) (Magnetospirillum magneticum) protein is ATP synthase subunit a.